Here is a 2273-residue protein sequence, read N- to C-terminus: Acetyl-CoA carboxylase, mitochondrial (2273 aa).

A mitochondrion-targeting transit peptide spans 1–104 (KGKTITHGQS…RGNIHKHTRL (104 aa)). Residues 134–635 (VISKILIANN…STGWLDDLIL (502 aa)) form the Biotin carboxylation domain. The ATP-grasp domain maps to 292-484 (KTNFVSVPDD…LPATQLQIAM (193 aa)). Residue 332 to 337 (GGGGKG) coordinates ATP. R459 is a catalytic residue. Residues 763–837 (LEAELNPTQV…EAGDVIAKLT (75 aa)) form the Biotinyl-binding domain. An N6-biotinyllysine modification is found at K804. Residues 1532-1867 (PYSVKDWLQP…KRDMSPPLLE (336 aa)) enclose the CoA carboxyltransferase N-terminal domain. The tract at residues 1532–2187 (PYSVKDWLQP…EGQVIKRLQK (656 aa)) is carboxyltransferase. Residues R1776, K2080, and R2082 each coordinate CoA. Positions 1871–2187 (RWDRDVDFKP…EGQVIKRLQK (317 aa)) constitute a CoA carboxyltransferase C-terminal domain.

The cofactor is biotin.

It localises to the mitochondrion. The catalysed reaction is hydrogencarbonate + acetyl-CoA + ATP = malonyl-CoA + ADP + phosphate + H(+). It catalyses the reaction N(6)-biotinyl-L-lysyl-[protein] + hydrogencarbonate + ATP = N(6)-carboxybiotinyl-L-lysyl-[protein] + ADP + phosphate + H(+). The protein operates within lipid metabolism; malonyl-CoA biosynthesis; malonyl-CoA from acetyl-CoA: step 1/1. In terms of biological role, catalyzes the rate-limiting reaction in the mitochondrial fatty acid synthesis (FAS) type II pathway. Responsible for the production of the mitochondrial malonyl-CoA, used for the biosynthesis of the cofactor lipoic acid. This protein carries three functions: biotin carboxyl carrier protein, biotin carboxylase, and carboxyltransferase. The protein is Acetyl-CoA carboxylase, mitochondrial (HFA1) of Saccharomyces cerevisiae (strain RM11-1a) (Baker's yeast).